The primary structure comprises 294 residues: Phosphatidylglycerol--prolipoprotein diacylglyceryl transferase (294 aa).

Helical transmembrane passes span 21–41 (VSLH…LWLA), 60–80 (LLYV…VLFY), 96–116 (WDGG…MIWF), 124–144 (FFQV…LGRI), 199–219 (SQLY…NIFV), 226–246 (GSVS…VEFF), and 259–279 (ISMG…FMVW). Arg143 serves as a coordination point for a 1,2-diacyl-sn-glycero-3-phospho-(1'-sn-glycerol).

This sequence belongs to the Lgt family.

It localises to the cell inner membrane. The catalysed reaction is L-cysteinyl-[prolipoprotein] + a 1,2-diacyl-sn-glycero-3-phospho-(1'-sn-glycerol) = an S-1,2-diacyl-sn-glyceryl-L-cysteinyl-[prolipoprotein] + sn-glycerol 1-phosphate + H(+). It participates in protein modification; lipoprotein biosynthesis (diacylglyceryl transfer). Its function is as follows. Catalyzes the transfer of the diacylglyceryl group from phosphatidylglycerol to the sulfhydryl group of the N-terminal cysteine of a prolipoprotein, the first step in the formation of mature lipoproteins. The chain is Phosphatidylglycerol--prolipoprotein diacylglyceryl transferase from Proteus mirabilis (strain HI4320).